Here is a 222-residue protein sequence, read N- to C-terminus: 2-C-methyl-D-erythritol 4-phosphate cytidylyltransferase (222 aa).

Belongs to the IspD/TarI cytidylyltransferase family. IspD subfamily.

It catalyses the reaction 2-C-methyl-D-erythritol 4-phosphate + CTP + H(+) = 4-CDP-2-C-methyl-D-erythritol + diphosphate. Its pathway is isoprenoid biosynthesis; isopentenyl diphosphate biosynthesis via DXP pathway; isopentenyl diphosphate from 1-deoxy-D-xylulose 5-phosphate: step 2/6. Its function is as follows. Catalyzes the formation of 4-diphosphocytidyl-2-C-methyl-D-erythritol from CTP and 2-C-methyl-D-erythritol 4-phosphate (MEP). This Azobacteroides pseudotrichonymphae genomovar. CFP2 protein is 2-C-methyl-D-erythritol 4-phosphate cytidylyltransferase.